The chain runs to 623 residues: Vacuolar-sorting receptor 1 (623 aa).

Positions 1–22 (MKCWRLSAILFLGFMLTSLSTA) are cleaved as a signal peptide. At 23-564 (RFVVEKNSLS…SKTASQAKST (542 aa)) the chain is on the lumenal side. The PA domain occupies 54 to 163 (QYGGSMAGNV…SFGEKLKDAI (110 aa)). The N-linked (GlcNAc...) asparagine glycan is linked to Asn-143. 2 EGF-like domains span residues 411-461 (ETNE…TTCE) and 464-511 (GHGR…KNCE). 6 disulfides stabilise this stretch: Cys-415–Cys-433, Cys-422–Cys-442, Cys-444–Cys-460, Cys-468–Cys-488, Cys-475–Cys-496, and Cys-498–Cys-510. Positions 512-554 (DIDECKDKKACQCPECSCKNTWGSYNCSCSGDLLYIKDQDTCI) constitute an EGF-like 3; calcium-binding domain. Residue Asn-537 is glycosylated (N-linked (GlcNAc...) asparagine). A disulfide bridge connects residues Cys-540 and Cys-553. Residues 565–585 (WAAFWVVLIALAMIAGGGFLV) traverse the membrane as a helical segment. Residues 586–623 (YKYRIRQYMDSEIRAIMAQYMPLDSQEEGPNHVNHQRG) are Cytoplasmic-facing. The short motif at 605 to 608 (YMPL) is the Tyrosine-based internalization motif element.

Belongs to the VSR (BP-80) family. As to quaternary structure, interacts with the N-terminal propeptide of aleurein (proaleurein).

It localises to the membrane. Its subcellular location is the golgi apparatus membrane. The protein localises to the cytoplasmic vesicle. It is found in the clathrin-coated vesicle membrane. The protein resides in the prevacuolar compartment membrane. Functionally, vacuolar-sorting receptor (VSR) involved in clathrin-coated vesicles sorting from Golgi apparatus to vacuoles. Seems to binds preferentially proteins containing a N-terminal NPIR motif. This Pisum sativum (Garden pea) protein is Vacuolar-sorting receptor 1 (BP80).